Here is a 220-residue protein sequence, read N- to C-terminus: MGFQIAIDGPAASGKSTVARLLAEKLGFDHLNTGATYRSVAVYLHERGFSPFSAEKEIENALKDLKIDYVNGRVYINGEDYTEKIQSPEAGVLASNFARLEVVRRHLVRIQREICDDKNIVVEGRDIGTVVLPNAHLKIFLTASLEARVERKLKEYQKRGLKVTKEEVERELISRDEQDSKRNVAPLKPAEDAVIIDTTSMSVEEVLDRILKLVRERMNT.

Position 9-17 (9-17 (GPAASGKST)) interacts with ATP.

This sequence belongs to the cytidylate kinase family. Type 1 subfamily.

The protein localises to the cytoplasm. It catalyses the reaction CMP + ATP = CDP + ADP. It carries out the reaction dCMP + ATP = dCDP + ADP. The chain is Cytidylate kinase from Thermotoga petrophila (strain ATCC BAA-488 / DSM 13995 / JCM 10881 / RKU-1).